The primary structure comprises 84 residues: MKVTLIAILTCAAVLVLHTTAAEELEESQLMEVGMPDTELAAVDEERLFECPVSCEIEKEGNKDCKKKKCKGGWKCKFNMCVKV.

The first 22 residues, 1 to 22, serve as a signal peptide directing secretion; the sequence is MKVTLIAILTCAAVLVLHTTAA. A propeptide spanning residues 23-47 is cleaved from the precursor; sequence EELEESQLMEVGMPDTELAAVDEER. Intrachain disulfides connect Cys51–Cys65, Cys55–Cys76, and Cys70–Cys81.

The protein belongs to the neurotoxin 12 (Hwtx-2) family. 02 (Hwtx-2) subfamily. As to expression, expressed by the venom gland.

The protein localises to the secreted. Functionally, postsynaptic neurotoxin. This is U4-theraphotoxin-Hhn1n from Cyriopagopus hainanus (Chinese bird spider).